The following is a 412-amino-acid chain: Major facilitator superfamily domain-containing protein 3 (412 aa).

12 helical membrane-spanning segments follow: residues 10–30 (GLYL…PILL), 40–60 (VGLT…APLV), 68–88 (VWLT…AVLP), 99–119 (TTVM…DVAL), 152–172 (GGLL…LLAA), 173–193 (TYWL…LPWP), 204–224 (YLLQ…FVLT), 252–272 (LWSG…GGAL), 291–311 (LGSL…GASV), 320–340 (AVLL…TATF), 361–381 (FLAT…GVLA), and 384–404 (LGPH…VLDL).

Belongs to the major facilitator superfamily. In brain, expressed in the cortex, striatum, hippocampus, hypothalamus, thalamus and cerebellum (at protein level). Widely expressed with highest levels in kidney and liver.

It is found in the membrane. The polypeptide is Major facilitator superfamily domain-containing protein 3 (Mfsd3) (Mus musculus (Mouse)).